The chain runs to 1337 residues: Rho GTPase-activating protein 29 (1337 aa).

Polar residues predominate over residues 1-13 (MFRQGSNSGNKRM). Disordered regions lie at residues 1 to 20 (MFRQ…ARLS), 369 to 397 (REEY…LEKK), 513 to 551 (SSKT…ADEV), and 564 to 654 (ERRS…TGLS). In terms of domain architecture, F-BAR spans 225–488 (EQVDLLLLKN…QAKKYEPGQR (264 aa)). Residues 326–443 (LLARKNDLDK…SEILAQIRKL (118 aa)) adopt a coiled-coil conformation. The segment covering 369 to 384 (REEYEKARSSTSRTEE) has biased composition (basic and acidic residues). Polar residues-rich tracts occupy residues 525 to 545 (QNST…SMDN) and 568 to 579 (NSSIDMQVPRTQ). Residues 596–613 (CSDSESAGGSSESRSMDS) are compositionally biased toward low complexity. Residues 676-723 (AHTHKLRKLRAPSKCRECDSLVVFHGAECEECSLACHKKCLETLAIQC) form a Phorbol-ester/DAG-type zinc finger. Residues 737-950 (IDFAQVVKNS…LLIKHHQMIF (214 aa)) enclose the Rho-GAP domain. A compositionally biased stretch (polar residues) spans 960-973 (TSPTVSQASFGSSI). Disordered regions lie at residues 960–983 (TSPT…LSRH), 1016–1066 (MKTG…AKPV), 1083–1114 (SRNT…TNFY), 1149–1210 (PPSG…KPSD), and 1273–1337 (TVSR…AHFV). A compositionally biased stretch (basic and acidic residues) spans 974 to 983 (QDKESKLSRH). The span at 1083-1092 (SRNTVEHDHS) shows a compositional bias: basic and acidic residues. Composition is skewed to polar residues over residues 1161-1177 (MASQ…SQSG) and 1295-1310 (VTLS…TEEL). Positions 1325–1337 (RMQELEHREAHFV) are enriched in basic and acidic residues.

Functionally, GTPase activator for the Rho-type GTPases by converting them to an inactive GDP-bound state. Has strong activity toward RHOA, and weaker activity toward RAC1 and CDC42. In Danio rerio (Zebrafish), this protein is Rho GTPase-activating protein 29 (arhgap29).